Here is a 100-residue protein sequence, read N- to C-terminus: Small ribosomal subunit protein uS14m (100 aa).

This sequence belongs to the universal ribosomal protein uS14 family.

The protein localises to the mitochondrion. The protein is Small ribosomal subunit protein uS14m (RPS14) of Vicia faba (Broad bean).